Here is a 419-residue protein sequence, read N- to C-terminus: Synaptic vesicle membrane protein VAT-1 homolog-like (419 aa).

Residues 1-25 (MAKEGVEKAEETEQMIEKEAGKEPA) show a composition bias toward basic and acidic residues. 2 disordered regions span residues 1 to 36 (MAKEGVEKAEETEQMIEKEAGKEPAEGGGGDGSHRL) and 384 to 419 (PTPLMANDSTETSEAGEEEEDHEGDSENKERMPFIQ). Ser-392 carries the post-translational modification Phosphoserine. Phosphothreonine occurs at positions 393 and 395. Ser-396 carries the phosphoserine modification. The span at 397–407 (EAGEEEEDHEG) shows a compositional bias: acidic residues. Positions 408-419 (DSENKERMPFIQ) are enriched in basic and acidic residues.

Belongs to the zinc-containing alcohol dehydrogenase family. Quinone oxidoreductase subfamily. In terms of tissue distribution, detected in skin fibroblasts.

This Homo sapiens (Human) protein is Synaptic vesicle membrane protein VAT-1 homolog-like (VAT1L).